Here is a 1481-residue protein sequence, read N- to C-terminus: Protein shortage in chiasmata 1 ortholog (1481 aa).

2 disordered regions span residues 479–498 and 512–560; these read TDVH…EKEV and KSKV…IQAS. Residues 513–531 show a composition bias toward basic and acidic residues; that stretch reads SKVEANPKNDQEPEARIMQ. The span at 543 to 560 shows a compositional bias: low complexity; it reads SSQVPSAESASSSQIQAS.

The protein belongs to the XPF family. Highly divergent. Interacts with TEX11. Interacts with SPO16. Mainly expressed in adult testis.

The protein localises to the chromosome. Functionally, ATPase required during meiosis for the formation of crossover recombination intermediates. Binds DNA: preferentially binds to single-stranded DNA and DNA branched structures. Does not show nuclease activity in vitro, but shows ATPase activity, which is stimulated by the presence of single-stranded DNA. Plays a key role in homologous recombination and crossing-over in meiotic prophase I in male and female germ cells. Required for proper synaptonemal complex assembly and homologous chromosome pairing. Required for recruitment of TEX11 and MSH4 to recombination intermediates. This Mus musculus (Mouse) protein is Protein shortage in chiasmata 1 ortholog.